Consider the following 304-residue polypeptide: Glucose-6-phosphate isomerase (304 aa).

The active-site Proton donor is E146. H177 is a catalytic residue.

The protein belongs to the GPI family.

The protein resides in the cytoplasm. The enzyme catalyses alpha-D-glucose 6-phosphate = beta-D-fructose 6-phosphate. Its pathway is carbohydrate degradation; glycolysis; D-glyceraldehyde 3-phosphate and glycerone phosphate from D-glucose: step 2/4. The sequence is that of Glucose-6-phosphate isomerase (PGI) from Calanus finmarchicus (Calanus tonsus).